The chain runs to 362 residues: Putative lipoprotein YdaJ (362 aa).

Residues 1-20 (MRHVLIAVILFFLSIGLSAG) form the signal peptide. A lipid anchor (N-palmitoyl cysteine) is attached at Cys21. A lipid anchor (S-diacylglycerol cysteine) is attached at Cys21.

The protein localises to the cell membrane. The sequence is that of Putative lipoprotein YdaJ (ydaJ) from Bacillus subtilis (strain 168).